The following is a 259-amino-acid chain: (3R)-3-hydroxyacyl-CoA dehydrogenase (259 aa).

NAD(+) contacts are provided by residues 13-21 and 40-41; these read LVTGAGSGI and DL. A Phosphoserine modification is found at S58. Position 66 is an N6-acetyllysine (K66). Residue 72–74 coordinates NAD(+); it reads ADV. Residue S154 participates in substrate binding. The residue at position 158 (K158) is an N6-succinyllysine. Residue Y167 is the Proton acceptor of the active site. NAD(+) contacts are provided by residues 167 to 171 and 200 to 202; these read YASSK and IAT. K171 carries the post-translational modification N6-succinyllysine.

This sequence belongs to the short-chain dehydrogenases/reductases (SDR) family. As to quaternary structure, heterotetramer with CBR4; contains two molecules of HSD17B8 and CBR4. Kidney, liver, testis, ovary and spleen. Oviduct, uterus, mammary gland, vagina, prostate, clitoral gland and moderately heart, dorsal skin, brain and lung.

The protein resides in the mitochondrion matrix. The catalysed reaction is a (3R)-3-hydroxyacyl-CoA + NAD(+) = a 3-oxoacyl-CoA + NADH + H(+). It carries out the reaction 17beta-estradiol + NAD(+) = estrone + NADH + H(+). The enzyme catalyses testosterone + NAD(+) = androst-4-ene-3,17-dione + NADH + H(+). It catalyses the reaction 17beta-hydroxy-5alpha-androstan-3-one + NAD(+) = 5alpha-androstan-3,17-dione + NADH + H(+). It participates in lipid metabolism; fatty acid biosynthesis. The protein operates within steroid biosynthesis; estrogen biosynthesis. It functions in the pathway lipid metabolism; mitochondrial fatty acid beta-oxidation. Functionally, required for the solubility and assembly of the heterotetramer 3-ketoacyl-[acyl carrier protein] (ACP) reductase functional complex (KAR or KAR1) that forms part of the mitochondrial fatty acid synthase (mtFAS). Alpha-subunit of the KAR complex, acts as scaffold protein, required for the stability of carbonyl reductase type-4 (CBR4, beta-subunit of the KAR complex) and for its 3-ketoacyl-ACP reductase activity, thereby participating in mitochondrial fatty acid biosynthesis. Catalyzes the NAD-dependent conversion of (3R)-3-hydroxyacyl-CoA into 3-ketoacyl-CoA (3-oxoacyl-CoA) with no chain length preference, this enzymatic activity is not needed for the KAR function. Prefers (3R)-3-hydroxyacyl-CoA over (3S)-3-hydroxyacyl-CoA and displays enzymatic activity only in the presence of NAD(+)(H). Cooperates with enoyl-CoA hydratase 1 in mitochondria, together they constitute an alternative route to the auxiliary enzyme pathways for the breakdown of Z-PUFA (cis polyunsaturated fatty acid) enoyl-esters. NAD-dependent 17-beta-hydroxysteroid dehydrogenase with highest activity towards estradiol. It efficiently catalyzes the oxidation of estradiol (E2), testosterone, and dihydrotestosterone. Primarily an oxidative enzyme, it can switch to a reductive mode determined in the appropriate physiologic milieu and catalyze the reduction of estrone (E1) to form biologically active estradiol (E2). The sequence is that of (3R)-3-hydroxyacyl-CoA dehydrogenase (Hsd17b8) from Mus musculus (Mouse).